A 310-amino-acid polypeptide reads, in one-letter code: N-acetyl-gamma-glutamyl-phosphate reductase (310 aa).

Residue C117 is part of the active site.

Belongs to the NAGSA dehydrogenase family. Type 2 subfamily.

The protein resides in the cytoplasm. The enzyme catalyses N-acetyl-L-glutamate 5-semialdehyde + phosphate + NADP(+) = N-acetyl-L-glutamyl 5-phosphate + NADPH + H(+). Its pathway is amino-acid biosynthesis; L-arginine biosynthesis; N(2)-acetyl-L-ornithine from L-glutamate: step 3/4. Its function is as follows. Catalyzes the NADPH-dependent reduction of N-acetyl-5-glutamyl phosphate to yield N-acetyl-L-glutamate 5-semialdehyde. The chain is N-acetyl-gamma-glutamyl-phosphate reductase from Rhizobium meliloti (strain 1021) (Ensifer meliloti).